The following is a 553-amino-acid chain: Salicylyl-CoA synthase / salicylate adenylyltransferase (553 aa).

Gly-203 serves as a coordination point for ATP. Residue His-246 to Asn-247 participates in substrate binding. ATP is bound by residues Gly-320, Val-342, Asp-426, Arg-441, and Lys-533. Position 533 (Lys-533) interacts with substrate.

It belongs to the ATP-dependent AMP-binding enzyme family.

It catalyses the reaction salicylate + ATP + CoA = 2-hydroxybenzoyl-CoA + AMP + diphosphate. Involved in the degradation of salicylate via a pathway involving coenzyme A derivative. Catalyzes the conversion of salicylate to salicyloyl-CoA via the formation of a salicylate-adenylate intermediate. The substrate specificity is strong, since benzoate, 3-hydroxybenzoate, 4-hydroxybenzoate, gentisate, 2-aminobenzoate, aminobenzoate, salicylamide, salicylaldoxime and 2-hydroxyphenyl acetate cannot substitute for salicylate. This chain is Salicylyl-CoA synthase / salicylate adenylyltransferase, found in Streptomyces sp.